The following is a 337-amino-acid chain: Ribosomal RNA small subunit methyltransferase C (337 aa).

Belongs to the methyltransferase superfamily. RsmC family. Monomer.

The protein resides in the cytoplasm. It carries out the reaction guanosine(1207) in 16S rRNA + S-adenosyl-L-methionine = N(2)-methylguanosine(1207) in 16S rRNA + S-adenosyl-L-homocysteine + H(+). Its function is as follows. Specifically methylates the guanine in position 1207 of 16S rRNA in the 30S particle. The polypeptide is Ribosomal RNA small subunit methyltransferase C (Acinetobacter baumannii (strain ATCC 17978 / DSM 105126 / CIP 53.77 / LMG 1025 / NCDC KC755 / 5377)).